The following is a 280-amino-acid chain: NAD kinase (280 aa).

The active-site Proton acceptor is the D60. Residues 60 to 61 (DG), 134 to 135 (ND), R145, D164, 175 to 180 (TAYSLS), and Q234 each bind NAD(+).

The protein belongs to the NAD kinase family. A divalent metal cation is required as a cofactor.

It localises to the cytoplasm. It carries out the reaction NAD(+) + ATP = ADP + NADP(+) + H(+). Involved in the regulation of the intracellular balance of NAD and NADP, and is a key enzyme in the biosynthesis of NADP. Catalyzes specifically the phosphorylation on 2'-hydroxyl of the adenosine moiety of NAD to yield NADP. The polypeptide is NAD kinase (Carboxydothermus hydrogenoformans (strain ATCC BAA-161 / DSM 6008 / Z-2901)).